The following is a 479-amino-acid chain: Cardiolipin synthase A (479 aa).

Helical transmembrane passes span 8–28 (FFGY…IHAL) and 38–58 (IAWA…YLVF). PLD phosphodiesterase domains follow at residues 218 to 245 (INFR…GDEY) and 392 to 419 (EPGF…DNRS). Catalysis depends on residues histidine 223, lysine 225, aspartate 230, histidine 397, lysine 399, and aspartate 404.

This sequence belongs to the phospholipase D family. Cardiolipin synthase subfamily. ClsA sub-subfamily.

It is found in the cell inner membrane. The enzyme catalyses 2 a 1,2-diacyl-sn-glycero-3-phospho-(1'-sn-glycerol) = a cardiolipin + glycerol. Its function is as follows. Catalyzes the reversible phosphatidyl group transfer from one phosphatidylglycerol molecule to another to form cardiolipin (CL) (diphosphatidylglycerol) and glycerol. The chain is Cardiolipin synthase A from Pseudomonas syringae pv. syringae (strain B728a).